The primary structure comprises 56 residues: Keratin-associated protein 20-1 (56 aa).

Belongs to the KRTAP type 20 family. As to quaternary structure, interacts with hair keratins.

In the hair cortex, hair keratin intermediate filaments are embedded in an interfilamentous matrix, consisting of hair keratin-associated proteins (KRTAP), which are essential for the formation of a rigid and resistant hair shaft through their extensive disulfide bond cross-linking with abundant cysteine residues of hair keratins. The matrix proteins include the high-sulfur and high-glycine-tyrosine keratins. The chain is Keratin-associated protein 20-1 (KRTAP20-1) from Homo sapiens (Human).